The primary structure comprises 527 residues: MAGLQLAPHLPVGVMFPHNKTEAPGLHSAKHDPYEQSDSSQRPSMGHLRNSFQSKLWSNTEMEQEDEVSTRPKRNVCTKARRHSCPHSAGIRQQGSGNNAQGQGKGLFYLSSPTPRYPKANDQDFIPFRRKRVGVDRAYPLKPMVHRKSHSTSDAGADGDQNGYPRLPDSSEFSDNSFGLRSWVNSSLLASVQAEKVVAELHRTEWTQIQRLEAAGESLQKEIRRKEILLQEKLKKTEEGLRRMQKEKKQAIFQEDRELQRMVLPRRRVRDGDHDTPHKPCLSPEFRSEVFSRNRGEDQTCDQAQENPSPRQLSDYELQKLKRERLMASNSKIRDQDAGPSADAFFQPAEELGSTLQESSRSGTPGSSGSSSSTEEPELAKCSHCGRSFLSLRLQRHSTVCGKMQGSKRKVFDSSRARAKGTELEQYLNWRGPATAKAETPPPPRKSTWRQKHESFIRTLRHARQVQQVIARGGNPSDLPSILPADNPDYVQCPHCSRHFAPKVAERHIPKCKTIKNRPPPPRRHDS.

Disordered stretches follow at residues 18–105 and 145–170; these read HNKT…GQGK and VHRK…LPDS. The span at 50–61 shows a compositional bias: polar residues; it reads NSFQSKLWSNTE. The span at 71 to 85 shows a compositional bias: basic residues; the sequence is RPKRNVCTKARRHSC. The span at 93–102 shows a compositional bias: low complexity; that stretch reads QQGSGNNAQG. Residues 207 to 254 are a coiled coil; sequence TQIQRLEAAGESLQKEIRRKEILLQEKLKKTEEGLRRMQKEKKQAIFQ. Disordered stretches follow at residues 264-316 and 352-379; these read LPRR…LSDY and LGST…EPEL. Residues 286–298 are compositionally biased toward basic and acidic residues; the sequence is FRSEVFSRNRGED. The span at 301 to 312 shows a compositional bias: polar residues; the sequence is CDQAQENPSPRQ. Positions 358–374 are enriched in low complexity; it reads ESSRSGTPGSSGSSSST. C2HC/C3H-type zinc fingers lie at residues 378–407 and 489–518; these read ELAK…MQGS and DYVQ…IKNR. Zn(2+)-binding residues include cysteine 382, cysteine 385, histidine 397, cysteine 401, cysteine 493, cysteine 496, histidine 508, and cysteine 512. The tract at residues 507 to 527 is disordered; sequence RHIPKCKTIKNRPPPPRRHDS.

It belongs to the ZC2HC1 family. The cofactor is Zn(2+).

The chain is Zinc finger C2HC domain-containing protein 1C (Zc2hc1c) from Mus musculus (Mouse).